We begin with the raw amino-acid sequence, 211 residues long: ATP-dependent Clp protease proteolytic subunit (211 aa).

Catalysis depends on Ser-114, which acts as the Nucleophile. The active site involves His-139.

It belongs to the peptidase S14 family. As to quaternary structure, fourteen ClpP subunits assemble into 2 heptameric rings which stack back to back to give a disk-like structure with a central cavity, resembling the structure of eukaryotic proteasomes.

Its subcellular location is the cytoplasm. It catalyses the reaction Hydrolysis of proteins to small peptides in the presence of ATP and magnesium. alpha-casein is the usual test substrate. In the absence of ATP, only oligopeptides shorter than five residues are hydrolyzed (such as succinyl-Leu-Tyr-|-NHMec, and Leu-Tyr-Leu-|-Tyr-Trp, in which cleavage of the -Tyr-|-Leu- and -Tyr-|-Trp bonds also occurs).. Cleaves peptides in various proteins in a process that requires ATP hydrolysis. Has a chymotrypsin-like activity. Plays a major role in the degradation of misfolded proteins. The sequence is that of ATP-dependent Clp protease proteolytic subunit from Pseudomonas fluorescens (strain Pf0-1).